The following is a 466-amino-acid chain: Glutamate--tRNA ligase (466 aa).

Positions 10–20 match the 'HIGH' region motif; that stretch reads PSPTGFLHIGG. Residues 252-256 carry the 'KMSKS' region motif; sequence KLSKR. Lysine 255 provides a ligand contact to ATP.

This sequence belongs to the class-I aminoacyl-tRNA synthetase family. Glutamate--tRNA ligase type 1 subfamily. Monomer.

It is found in the cytoplasm. The catalysed reaction is tRNA(Glu) + L-glutamate + ATP = L-glutamyl-tRNA(Glu) + AMP + diphosphate. Its function is as follows. Catalyzes the attachment of glutamate to tRNA(Glu) in a two-step reaction: glutamate is first activated by ATP to form Glu-AMP and then transferred to the acceptor end of tRNA(Glu). In Mycoplasmopsis synoviae (strain 53) (Mycoplasma synoviae), this protein is Glutamate--tRNA ligase.